We begin with the raw amino-acid sequence, 87 residues long: Small ribosomal subunit protein eS21 (87 aa).

Belongs to the eukaryotic ribosomal protein eS21 family. In terms of assembly, component of the small ribosomal subunit (SSU). Mature N.crassa ribosomes consist of a small (40S) and a large (60S) subunit. The 40S small subunit contains 1 molecule of ribosomal RNA (18S rRNA) and at least 32 different proteins. The large 60S subunit contains 3 rRNA molecules (26S, 5.8S and 5S rRNA) and at least 42 different proteins.

It is found in the cytoplasm. Its function is as follows. Component of the ribosome, a large ribonucleoprotein complex responsible for the synthesis of proteins in the cell. The small ribosomal subunit (SSU) binds messenger RNAs (mRNAs) and translates the encoded message by selecting cognate aminoacyl-transfer RNA (tRNA) molecules. The large subunit (LSU) contains the ribosomal catalytic site termed the peptidyl transferase center (PTC), which catalyzes the formation of peptide bonds, thereby polymerizing the amino acids delivered by tRNAs into a polypeptide chain. The nascent polypeptides leave the ribosome through a tunnel in the LSU and interact with protein factors that function in enzymatic processing, targeting, and the membrane insertion of nascent chains at the exit of the ribosomal tunnel. This Neurospora crassa (strain ATCC 24698 / 74-OR23-1A / CBS 708.71 / DSM 1257 / FGSC 987) protein is Small ribosomal subunit protein eS21 (crp-7).